A 311-amino-acid polypeptide reads, in one-letter code: Lipid A biosynthesis acyltransferase (311 aa).

The chain crosses the membrane as a helical span at residues 19-39 (WLFWLGVAIWRSILCLPYPIL). The HXXXXD motif motif lies at 134–139 (HFLTLE).

This sequence belongs to the LpxL/LpxM/LpxP family.

It localises to the cell inner membrane. The enzyme catalyses an alpha-Kdo-(2-&gt;4)-alpha-Kdo-(2-&gt;6)-lipid IVA + a fatty acyl-[ACP] = an alpha-Kdo-(2-&gt;4)-alpha-Kdo-(2-&gt;6)-(acyl)-lipid IVA + holo-[ACP]. It functions in the pathway glycolipid biosynthesis; KDO(2)-lipid A biosynthesis; KDO(2)-lipid A from CMP-3-deoxy-D-manno-octulosonate and lipid IV(A): step 3/4. Its pathway is bacterial outer membrane biogenesis; lipopolysaccharide biosynthesis. Its function is as follows. Catalyzes the transfer of an acyl chain from an acyl-[acyl-carrier-protein] (ACP) to a Kdo(2)-lipid IV(A) to form a Kdo(2)-(acyl)-lipid IV(A). The protein is Lipid A biosynthesis acyltransferase of Haemophilus influenzae (strain ATCC 51907 / DSM 11121 / KW20 / Rd).